The primary structure comprises 464 residues: Protein FAM90A16 (464 aa).

Disordered stretches follow at residues 1 to 42 (MMAR…DPRL), 70 to 389 (PATL…HDGA), and 415 to 437 (HSPE…SEAP). 2 stretches are compositionally biased toward basic and acidic residues: residues 74 to 89 (GKKE…KPRV) and 97 to 114 (NKDK…DPQR). Residues 180 to 197 (LASLSPLRKASLSSSSSL) show a composition bias toward low complexity.

The protein belongs to the FAM90 family.

This is Protein FAM90A16 from Homo sapiens (Human).